The primary structure comprises 28 residues: C-hordein (28 aa).

The interval 1–28 (RQLNPSSQELQSPQQSYLQQPYPQNPYL) is disordered.

Developing endosperm.

Sulfur-poor seed storage protein. This chain is C-hordein, found in Hordeum vulgare subsp. spontaneum (Wild barley).